We begin with the raw amino-acid sequence, 466 residues long: Soluble pyridine nucleotide transhydrogenase (466 aa).

Glutamate 36 to cysteine 45 contacts FAD.

This sequence belongs to the class-I pyridine nucleotide-disulfide oxidoreductase family. FAD serves as cofactor.

The protein resides in the cytoplasm. It catalyses the reaction NAD(+) + NADPH = NADH + NADP(+). Functionally, conversion of NADPH, generated by peripheral catabolic pathways, to NADH, which can enter the respiratory chain for energy generation. This chain is Soluble pyridine nucleotide transhydrogenase, found in Yersinia enterocolitica serotype O:8 / biotype 1B (strain NCTC 13174 / 8081).